The following is a 461-amino-acid chain: Argininosuccinate lyase (461 aa).

Belongs to the lyase 1 family. Argininosuccinate lyase subfamily.

Its subcellular location is the cytoplasm. The catalysed reaction is 2-(N(omega)-L-arginino)succinate = fumarate + L-arginine. Its pathway is amino-acid biosynthesis; L-arginine biosynthesis; L-arginine from L-ornithine and carbamoyl phosphate: step 3/3. This Chlorobium luteolum (strain DSM 273 / BCRC 81028 / 2530) (Pelodictyon luteolum) protein is Argininosuccinate lyase.